We begin with the raw amino-acid sequence, 174 residues long: UPF0316 protein lwe1794 (174 aa).

Helical transmembrane passes span 4–24 (GLFI…IYTV), 36–56 (LAAL…SLVL), and 62–82 (IANV…GMKI).

This sequence belongs to the UPF0316 family.

Its subcellular location is the cell membrane. This Listeria welshimeri serovar 6b (strain ATCC 35897 / DSM 20650 / CCUG 15529 / CIP 8149 / NCTC 11857 / SLCC 5334 / V8) protein is UPF0316 protein lwe1794.